A 360-amino-acid polypeptide reads, in one-letter code: Photosystem II protein D1 (360 aa).

3 consecutive transmembrane segments (helical) span residues 29–46, 118–133, and 142–156; these read YIGW…TATS, HFLL…EWEL, and WIFV…AASA. His-118 serves as a coordination point for chlorophyll a. Tyr-126 provides a ligand contact to pheophytin a. [CaMn4O5] cluster is bound by residues Asp-170 and Glu-189. Residues 197–218 traverse the membrane as a helical segment; that stretch reads FHMAGVAGVFGGSLFSAMHGSL. Position 198 (His-198) interacts with chlorophyll a. A quinone-binding positions include His-215 and 264 to 265; that span reads SF. His-215 provides a ligand contact to Fe cation. His-272 contacts Fe cation. Residues 274-288 form a helical membrane-spanning segment; it reads FLAAWPVVGIWLTAM. Positions 332, 333, 342, and 344 each coordinate [CaMn4O5] cluster. Residues 345-360 constitute a propeptide that is removed on maturation; that stretch reads SGDVLPVALNAPAVNG.

The protein belongs to the reaction center PufL/M/PsbA/D family. As to quaternary structure, PSII is composed of 1 copy each of membrane proteins PsbA, PsbB, PsbC, PsbD, PsbE, PsbF, PsbH, PsbI, PsbJ, PsbK, PsbL, PsbM, PsbT, PsbX, PsbY, PsbZ, Psb30/Ycf12, at least 3 peripheral proteins of the oxygen-evolving complex and a large number of cofactors. It forms dimeric complexes. The D1/D2 heterodimer binds P680, chlorophylls that are the primary electron donor of PSII, and subsequent electron acceptors. It shares a non-heme iron and each subunit binds pheophytin, quinone, additional chlorophylls, carotenoids and lipids. D1 provides most of the ligands for the Mn4-Ca-O5 cluster of the oxygen-evolving complex (OEC). There is also a Cl(-1) ion associated with D1 and D2, which is required for oxygen evolution. The PSII complex binds additional chlorophylls, carotenoids and specific lipids. serves as cofactor. Post-translationally, tyr-161 forms a radical intermediate that is referred to as redox-active TyrZ, YZ or Y-Z. In terms of processing, C-terminally processed by CTPA; processing is essential to allow assembly of the oxygen-evolving complex and thus photosynthetic growth.

The protein resides in the plastid. The protein localises to the chloroplast thylakoid membrane. It carries out the reaction 2 a plastoquinone + 4 hnu + 2 H2O = 2 a plastoquinol + O2. In terms of biological role, photosystem II (PSII) is a light-driven water:plastoquinone oxidoreductase that uses light energy to abstract electrons from H(2)O, generating O(2) and a proton gradient subsequently used for ATP formation. It consists of a core antenna complex that captures photons, and an electron transfer chain that converts photonic excitation into a charge separation. The D1/D2 (PsbA/PsbD) reaction center heterodimer binds P680, the primary electron donor of PSII as well as several subsequent electron acceptors. The protein is Photosystem II protein D1 of Trieres chinensis (Marine centric diatom).